Here is a 76-residue protein sequence, read N- to C-terminus: Vasotab-TY3 (76 aa).

An N-terminal signal peptide occupies residues 1-21 (MKFALFSVLVLMLIATFVAAD). A Kazal-like domain is found at 22-76 (DCPRICTSDYTPVCGTPSGGRRSANRTFANQCGLDSHNCLNKGDTYDKLHDGECK). 3 cysteine pairs are disulfide-bonded: Cys-23-Cys-60, Cys-27-Cys-53, and Cys-35-Cys-75.

Expressed by the salivary gland.

It is found in the secreted. Its function is as follows. Vasodilator protein that inhibits vasoconstriction of isolated rat femoral artery induced by phenylephrine. Since platelet aggregation and vasoconstriction are key hemostatic responses, particularly in small wounds, this protein likely participates in the antihemostatic responses during blood feeding. Blocks L-type calcium channels (Cav1/CACNA1) in left ventricular myocytes isolated from rat hearts. In Tabanus yao (Horsefly), this protein is Vasotab-TY3.